Here is a 423-residue protein sequence, read N- to C-terminus: Hydroxymethylglutaryl-CoA synthase-like protein AKT4-1 (423 aa).

The protein belongs to the thiolase-like superfamily. HMG-CoA synthase family.

Its pathway is mycotoxin biosynthesis. Functionally, hydroxymethylglutaryl-CoA synthase-like protein; part of the gene clusters that mediate the biosynthesis of the host-selective toxins (HSTs) AK-toxins responsible for Japanese pear black spot disease by the Japanese pear pathotype. AK-toxins are esters of 9,10-epoxy 8-hydroxy 9-methyldecatrienoic acid (EDA). On cellular level, AK-toxins affect plasma membrane of susceptible cells and cause a sudden increase in loss of K(+) after a few minutes of toxin treatment. The acyl-CoA ligase AKT1, the hydrolase AKT2 and enoyl-CoA hydratase AKT3 are all involved in the biosynthesis of the AK-, AF- and ACT-toxin common 9,10-epoxy-8-hydroxy-9-methyl-decatrienoic acid (EDA) structural moiety. Part of the EDA biosynthesis occurs in the peroxisome since these 3 enzymes are localized in peroxisomes. The exact roles of the 3 enzymes, as well as of additional AK-toxin clusters enzymes, including AKT4, AKT6 and AKTS1, have still to be elucidated. The Cytochrome P450 monooxygenase AKT7 on the other side functions to limit production of EDA and AK-toxin, probably via the catalysis of a side reaction of EDA or its precursor. In Alternaria alternata (Alternaria rot fungus), this protein is Hydroxymethylglutaryl-CoA synthase-like protein AKT4-1.